Reading from the N-terminus, the 179-residue chain is MNQLTSLYLAALNRVTWQQPDDIEFPAPLAQQWLLEQGSLSRRMATQCEHLTVDLLSNQIMLADTLSYDETQLLASEEYLLRQVIIYGDQQPWVFGHTLIPRSSMHNQPFDFTQQGKIPLGLTVFSADNVKRDALQVGWVETELGRLLARRSRLWMNNKPMLVTELFLATSPIYSKERV.

Residues Arg82, Leu120, and Glu165 each coordinate substrate.

Belongs to the UbiC family.

Its subcellular location is the cytoplasm. It catalyses the reaction chorismate = 4-hydroxybenzoate + pyruvate. It functions in the pathway cofactor biosynthesis; ubiquinone biosynthesis. In terms of biological role, removes the pyruvyl group from chorismate, with concomitant aromatization of the ring, to provide 4-hydroxybenzoate (4HB) for the ubiquinone pathway. The protein is Probable chorismate pyruvate-lyase of Vibrio cholerae serotype O1 (strain ATCC 39315 / El Tor Inaba N16961).